Consider the following 1224-residue polypeptide: Integrin alpha pat-2 (1224 aa).

The signal sequence occupies residues 1 to 27 (MREGSFPRRTRLLCLLAAVVLISTVTS). The Extracellular portion of the chain corresponds to 28-1153 (FNIDTKNVVL…ASEEGRDLPW (1126 aa)). 7 FG-GAP repeats span residues 29-96 (NIDT…TCRE), 110-173 (NGSH…KTEE), 180-235 (EPAR…TDRP), 236-292 (NTEY…MMIN), 293-347 (LTDE…KPQY), 364-423 (GKQL…GVRE), and 427-490 (QKIE…PESA). N-linked (GlcNAc...) asparagine glycosylation is found at Asn74, Asn110, Asn230, and Asn292. Residue Asn610 is glycosylated (N-linked (GlcNAc...) asparagine). A Cell attachment site motif is present at residues 622–624 (RGD). Residues Asn681, Asn775, and Asn819 are each glycosylated (N-linked (GlcNAc...) asparagine). Disordered stretches follow at residues 898–968 (LRIT…QNTG) and 981–1037 (DYEY…KARF). Over residues 920-931 (REEDDESYEDET) the composition is skewed to acidic residues. Residues 955–964 (VYERDEDKIR) are compositionally biased toward basic and acidic residues. The span at 984 to 1003 (YIPDDQEYDGDDFEDDDEDF) shows a compositional bias: acidic residues. Basic residues predominate over residues 1008–1023 (SKRVKRAPVPKKKKKE). The span at 1024–1037 (GSRSGEPRSDKARF) shows a compositional bias: basic and acidic residues. A helical transmembrane segment spans residues 1154–1174 (WLYLLAILIGLAILILLILLL). Topologically, residues 1175-1224 (WRCGFFKRNRPPTEHAELRAEKQPAAHYADTQSRYAPQDQYSQGRHGQML) are cytoplasmic. A disordered region spans residues 1190 to 1224 (AELRAEKQPAAHYADTQSRYAPQDQYSQGRHGQML). Residues 1204-1224 (DTQSRYAPQDQYSQGRHGQML) are compositionally biased toward polar residues.

The protein belongs to the integrin alpha chain family. Heterodimer of an alpha and a beta subunit. Alpha pat-2 associates with beta pat-3.

The protein localises to the membrane. In terms of biological role, required for muscle development probably through the regulation of the actin-myosin cytoskeleton. During the formation of neuromuscular junctions at the larval stage, negatively regulates membrane protrusion from body wall muscles, probably through lamins such as epi-1, lam-2 and unc-52. Required for distal tip cell migration and dorsal pathfinding. Required for egg-laying. May play a role in cell motility and cell-cell interactions. The chain is Integrin alpha pat-2 from Caenorhabditis briggsae.